Here is a 304-residue protein sequence, read N- to C-terminus: Protein PagO (304 aa).

10 consecutive transmembrane segments (helical) span residues 4-24 (VSIS…WLAM), 34-54 (VFAT…IAWL), 67-87 (LFQF…MIYG), 95-115 (LAAI…VLFL), 119-139 (AKLM…GILL), 150-170 (WQGI…YTQC), 180-200 (ITFN…TGWF), 214-234 (ILAT…CYFA), 246-266 (LVFL…YGYA), and 267-287 (ISTH…LTLV). EamA domains follow at residues 15 to 139 (LTWG…GILL) and 161 to 287 (LIHA…LTLV).

The protein belongs to the EamA transporter family.

Its subcellular location is the cell membrane. The sequence is that of Protein PagO (pagO) from Salmonella typhimurium (strain LT2 / SGSC1412 / ATCC 700720).